A 228-amino-acid polypeptide reads, in one-letter code: 5'-methylthioadenosine/S-adenosylhomocysteine nucleosidase (228 aa).

The Proton acceptor role is filled by E11. Residues G77, I151, and 172–173 contribute to the substrate site; that span reads ME. The Proton donor role is filled by D196.

This sequence belongs to the PNP/UDP phosphorylase family. MtnN subfamily.

It carries out the reaction S-adenosyl-L-homocysteine + H2O = S-(5-deoxy-D-ribos-5-yl)-L-homocysteine + adenine. The enzyme catalyses S-methyl-5'-thioadenosine + H2O = 5-(methylsulfanyl)-D-ribose + adenine. The catalysed reaction is 5'-deoxyadenosine + H2O = 5-deoxy-D-ribose + adenine. Its pathway is amino-acid biosynthesis; L-methionine biosynthesis via salvage pathway; S-methyl-5-thio-alpha-D-ribose 1-phosphate from S-methyl-5'-thioadenosine (hydrolase route): step 1/2. Functionally, catalyzes the irreversible cleavage of the glycosidic bond in both 5'-methylthioadenosine (MTA) and S-adenosylhomocysteine (SAH/AdoHcy) to adenine and the corresponding thioribose, 5'-methylthioribose and S-ribosylhomocysteine, respectively. Also cleaves 5'-deoxyadenosine, a toxic by-product of radical S-adenosylmethionine (SAM) enzymes, into 5-deoxyribose and adenine. The polypeptide is 5'-methylthioadenosine/S-adenosylhomocysteine nucleosidase (Staphylococcus aureus (strain JH1)).